A 362-amino-acid chain; its full sequence is Class I histocompatibility antigen, Gogo-B*0101 alpha chain (362 aa).

The first 24 residues, 1–24, serve as a signal peptide directing secretion; it reads MRVTAPRTLLLLLSAALALTETWA. The tract at residues 25-114 is alpha-1; it reads GSHSMRYFDT…ALRYYNQSEA (90 aa). Residues 25-308 are Extracellular-facing; it reads GSHSMRYFDT…EPSSQSTIPI (284 aa). N110 carries an N-linked (GlcNAc...) asparagine glycan. The interval 115-206 is alpha-2; it reads GSHTIQRMFG…ENGRETLQRA (92 aa). Cystine bridges form between C125-C188 and C227-C283. The interval 207–298 is alpha-3; that stretch reads DTPKTHVTHH…GLPKPLTLRW (92 aa). The 87-residue stretch at 209–295 folds into the Ig-like C1-type domain; that stretch reads PKTHVTHHPI…QHEGLPKPLT (87 aa). Positions 299–308 are connecting peptide; it reads EPSSQSTIPI. Residues 309–332 form a helical membrane-spanning segment; it reads VGIVAGLAVLAVVVIGAVVTAVIC. The Cytoplasmic portion of the chain corresponds to 333 to 362; that stretch reads RRKSSGGKGGSYSQAASSDSAQGSDVSLTA. Residues 335–362 are disordered; the sequence is KSSGGKGGSYSQAASSDSAQGSDVSLTA. Low complexity predominate over residues 343-362; it reads SYSQAASSDSAQGSDVSLTA. Phosphoserine is present on residues S356 and S359.

This sequence belongs to the MHC class I family. Heterodimer of an alpha chain and a beta chain (beta-2-microglobulin).

The protein resides in the membrane. Involved in the presentation of foreign antigens to the immune system. The polypeptide is Class I histocompatibility antigen, Gogo-B*0101 alpha chain (Gorilla gorilla gorilla (Western lowland gorilla)).